The sequence spans 1282 residues: Indigoidine synthase (1282 aa).

An adenylation region spans residues 24–379 (AQRVAEHPEA…GGIQLARGYL (356 aa)). Residues 937–1012 (APRTETEKEI…KLARRLEREV (76 aa)) enclose the Carrier domain. An O-(pantetheine 4'-phosphoryl)serine modification is found at serine 972. The thioesterase stretch occupies residues 1030–1138 (RPVICWPGLG…APGSPKVRAE (109 aa)).

Belongs to the ATP-dependent AMP-binding enzyme family. Pantetheine 4'-phosphate is required as a cofactor.

The catalysed reaction is 2 FMN + 2 L-glutamine + 2 ATP + O2 = indigoidine + 2 FMNH2 + 2 AMP + 2 diphosphate + 2 H2O. It catalyses the reaction FMN + L-glutamine + ATP = 3-amino-1,5-dihydropyridine-2,6-dione + FMNH2 + AMP + diphosphate. The enzyme catalyses 2 3-amino-1,5-dihydropyridine-2,6-dione + O2 = indigoidine + 2 H2O. It participates in pigment biosynthesis. In terms of biological role, nonribosomal peptide synthetase involved in the biosynthesis of the blue pigment indigoidine. Catalyzes the synthesis of the blue pigment using L-Gln as a substrate. Two glutamine molecules are cyclized and oxidized to form indigoidine. This chain is Indigoidine synthase, found in Streptomyces lavendulae.